We begin with the raw amino-acid sequence, 1958 residues long: Probable Rho GTPase-activating protein CG5521 (1958 aa).

Disordered regions lie at residues 1 to 21, 400 to 424, and 635 to 804; these read MFTK…QDSK, PPFL…RSQR, and GSVW…GIEG. The segment covering 400 to 414 has biased composition (pro residues); the sequence is PPFLLEPNDDPPPPS. Positions 640–656 are enriched in low complexity; sequence GSGSNSAANGGSAASAA. A phosphoserine mark is found at S718, S764, and S767. Positions 758–774 are enriched in basic and acidic residues; it reads DLRRAMSLDSLARKGDA. A compositionally biased stretch (acidic residues) spans 775-785; sequence EETDSYQEGDN. A phosphoserine mark is found at S787, S791, S793, and S795. Polar residues predominate over residues 788–800; that stretch reads GAGSRSPSPTASS. Y980 carries the phosphotyrosine modification. The tract at residues 1534–1568 is disordered; that stretch reads HSTQAPSPALRHASSNSSLQQPDQRSLHSTTASFD. Positions 1546–1568 are enriched in polar residues; sequence ASSNSSLQQPDQRSLHSTTASFD. Phosphoserine is present on S1551. A Rap-GAP domain is found at 1612–1819; the sequence is LRNVDLQKCR…EERNRSLDSV (208 aa). Residues 1903-1958 are disordered; it reads ATGMSSASPRGPRKLGAPFKSVTKKHSLQHIAVGGGAGAGGDTPPESPTLPQRRFK. T1945 carries the phosphothreonine modification. S1949 carries the post-translational modification Phosphoserine.

This chain is Probable Rho GTPase-activating protein CG5521, found in Drosophila melanogaster (Fruit fly).